A 414-amino-acid polypeptide reads, in one-letter code: CinA-like protein (414 aa).

It belongs to the CinA family.

The protein is CinA-like protein of Citrifermentans bemidjiense (strain ATCC BAA-1014 / DSM 16622 / JCM 12645 / Bem) (Geobacter bemidjiensis).